The following is a 379-amino-acid chain: Type II methyltransferase M.SsoII (379 aa).

The HTH cro/C1-type domain occupies I9–N66. Positions Y72 to S379 constitute an SAM-dependent MTase C5-type domain. Residue C142 is part of the active site.

It belongs to the class I-like SAM-binding methyltransferase superfamily. C5-methyltransferase family.

The catalysed reaction is a 2'-deoxycytidine in DNA + S-adenosyl-L-methionine = a 5-methyl-2'-deoxycytidine in DNA + S-adenosyl-L-homocysteine + H(+). Functionally, a methylase that recognizes the double-stranded sequence 5'-CCNGG-3', methylates C-2 on both strands, and protects the DNA from cleavage by the SsoII endonuclease. The protein is Type II methyltransferase M.SsoII (ssoIIM) of Shigella sonnei.